Here is a 238-residue protein sequence, read N- to C-terminus: 7-carboxy-7-deazaguanine synthase (238 aa).

Residues 14–16 (IQG) and arginine 29 contribute to the substrate site. In terms of domain architecture, Radical SAM core spans 20–234 (VVGQKTMFIR…PQLHALVWGN (215 aa)). Residues cysteine 33, cysteine 37, and cysteine 40 each coordinate [4Fe-4S] cluster. Serine 42 contributes to the Mg(2+) binding site. Serine 80 contacts substrate. Residues glycine 82 and 126-128 (SPK) contribute to the S-adenosyl-L-methionine site.

Belongs to the radical SAM superfamily. 7-carboxy-7-deazaguanine synthase family. In terms of assembly, homodimer. [4Fe-4S] cluster serves as cofactor. It depends on S-adenosyl-L-methionine as a cofactor. The cofactor is Mg(2+).

It carries out the reaction 6-carboxy-5,6,7,8-tetrahydropterin + H(+) = 7-carboxy-7-deazaguanine + NH4(+). The protein operates within purine metabolism; 7-cyano-7-deazaguanine biosynthesis. Its function is as follows. Catalyzes the complex heterocyclic radical-mediated conversion of 6-carboxy-5,6,7,8-tetrahydropterin (CPH4) to 7-carboxy-7-deazaguanine (CDG), a step common to the biosynthetic pathways of all 7-deazapurine-containing compounds. The protein is 7-carboxy-7-deazaguanine synthase of Bacillus cereus (strain ATCC 14579 / DSM 31 / CCUG 7414 / JCM 2152 / NBRC 15305 / NCIMB 9373 / NCTC 2599 / NRRL B-3711).